The following is a 103-amino-acid chain: Preprofallaxidin-6 (103 aa).

The N-terminal stretch at 1–22 is a signal peptide; the sequence is MASLKKSLFLVLFLGFVSLSIC. The propeptide occupies 23–49; sequence EEEKRENEGNENEEEDENHEEGSEEKR. The tract at residues 24 to 50 is disordered; it reads EEKRENEGNENEEEDENHEEGSEEKRG. The segment covering 31–41 has biased composition (acidic residues); it reads GNENEEEDENH. The residue at position 65 (Leu65) is a Leucine amide. Positions 67 to 103 are disordered; that stretch reads KRSEEKRYHPFGKRSEEKRYHPFGKRSEEKRYPPIGK. A propeptide spanning residues 69 to 73 is cleaved from the precursor; that stretch reads SEEKR. Phe77 is subject to Phenylalanine amide. A propeptide spanning residues 81-85 is cleaved from the precursor; it reads SEEKR. A Phenylalanine amide modification is found at Phe89. A propeptide spanning residues 93 to 97 is cleaved from the precursor; the sequence is SEEKR. Position 101 is an isoleucine amide (Ile101).

This sequence belongs to the frog skin active peptide (FSAP) family. Brevinin subfamily. As to expression, expressed by the skin glands.

It is found in the secreted. Its function is as follows. Fallaxidin-1.3 shows no antibacterial activity against Gram-positive or Gram-negative bacteria. Does not inhibit the formation of NO by neuronal nitric oxide synthase. Has no effect on splenocyte proliferation or smooth muscle contraction. In terms of biological role, fallaxidin-1.4 shows no antibacterial activity against Gram-positive or Gram-negative bacteria. Does not inhibit the formation of NO by neuronal nitric oxide synthase. Has no effect on splenocyte proliferation or smooth muscle contraction. Fallaxidin-3.1 shows antibacterial activity against the Gram-positive bacteria E.faecalis (MIC=100 uM) and L.lactis (MIC=100 uM). No antibacterial activity against the Gram-positive bacteria B.cereus, L.innocua, M.luteus, S.epidermidis, S.uberis and S.aureus, or the Gram-negative bacteria E.cloacae and E.coli. The chain is Preprofallaxidin-6 from Litoria fallax (Eastern dwarf tree frog).